Reading from the N-terminus, the 160-residue chain is Transcription antitermination protein NusB (160 aa).

It belongs to the NusB family.

In terms of biological role, involved in transcription antitermination. Required for transcription of ribosomal RNA (rRNA) genes. Binds specifically to the boxA antiterminator sequence of the ribosomal RNA (rrn) operons. This is Transcription antitermination protein NusB from Chlamydia pneumoniae (Chlamydophila pneumoniae).